Here is a 2849-residue protein sequence, read N- to C-terminus: Polycystin-1-like protein 1 (2849 aa).

The Extracellular segment spans residues 1–1748 (MAEEAAQNIS…SDISKLQSHP (1748 aa)). Asparagine 8, asparagine 295, asparagine 338, asparagine 376, asparagine 447, asparagine 482, asparagine 514, asparagine 605, asparagine 657, asparagine 751, asparagine 875, asparagine 926, and asparagine 937 each carry an N-linked (GlcNAc...) asparagine glycan. PKD domains are found at residues 508–590 (SVSV…VQKK) and 592–673 (VANR…VCEP). The REJ domain maps to 674–1571 (CQPPLVKNMG…GEEDGLDNRR (898 aa)). The span at 970 to 987 (NLLPTEPGTADPDATTTP) shows a compositional bias: low complexity. Disordered stretches follow at residues 970 to 1068 (NLLP…PHLS) and 1081 to 1118 (IPSG…DPSL). A compositionally biased stretch (basic and acidic residues) spans 1053 to 1068 (RSERSQPTHSPDPHLS). N-linked (GlcNAc...) asparagine glycans are attached at residues asparagine 1233, asparagine 1301, asparagine 1306, asparagine 1572, asparagine 1681, and asparagine 1716. The 149-residue stretch at 1587–1735 (QFTELSENPQ…ALLRRKLKAS (149 aa)) folds into the GAIN-B domain. A disulfide bridge links cysteine 1691 with cysteine 1717. The interval 1691–1735 (CLFWDKREWKSERFSPQPGTSPEKVNCSYHRLAAFALLRRKLKAS) is GPS. Residues 1749–1769 (ENLLPSIFIMGSVILYGFLVA) form a helical membrane-spanning segment. Residues 1770–1956 (KSRQVDHHEK…SSSRYLHTPR (187 aa)) are Cytoplasmic-facing. Positions 1796–1913 (QLYAVVIDTG…HDGRVERELT (118 aa)) constitute a PLAT domain. The chain crosses the membrane as a helical span at residues 1957 to 1977 (LTVSFSLLCVYACLTALVAAG). Residues 1978–1992 (GQEQPHLDVSPTLGS) lie on the Extracellular side of the membrane. Residues 1993–2013 (FRVGLLCTLLASPGAQLLSLL) traverse the membrane as a helical segment. Over 2014–2135 (FRLSKEAPGS…SRALQPWWSS (122 aa)) the chain is Cytoplasmic. Residues 2023–2089 (SARVEPHSPL…GTACPAPKLQ (67 aa)) form a disordered region. Residues 2136–2156 (AVWAICGTASLACSLGTGFLA) form a helical membrane-spanning segment. Over 2157–2174 (YRFGQEQCVQWLHLLSLS) the chain is Extracellular. Residues 2175-2195 (VVCCIFITQPLMVCLMALGFA) traverse the membrane as a helical segment. At 2196–2281 (WKRRADNHFF…QRMRRESRTR (86 aa)) the chain is on the cytoplasmic side. A helical membrane pass occupies residues 2282 to 2302 (AALRDISMDILMLLLLLCVIY). The Extracellular portion of the chain corresponds to 2303-2522 (GRFSQDEYSL…FRSDSALQYH (220 aa)). Asparagine 2426 carries N-linked (GlcNAc...) asparagine glycosylation. The helical transmembrane segment at 2523–2543 (LMLPQLVFLALSLIHLCVQLY) threads the bilayer. The Cytoplasmic segment spans residues 2544–2562 (RMMDKGVLSYWRKPRNWLE). The chain crosses the membrane as a helical span at residues 2563–2583 (LSVVGVSLTYYAVSGHLVTLA). Residues 2584-2616 (GDVTNQFHRGLCRAFMDLTLMASWNQRARWLRG) are Extracellular-facing. A helical transmembrane segment spans residues 2617-2637 (ILLFLFTLKCVYLPGIQNTMA). At 2638 to 2646 (SCSSMMRHS) the chain is on the cytoplasmic side. Residues 2647 to 2667 (LPSIFVAGLVGALMLAALSHL) form a helical membrane-spanning segment. Residues 2668-2711 (HRFLLSMWVLPPGTFTDAFPGLLFHFPRRSQKDCLLGLSKSDQR) are Extracellular-facing. A helical membrane pass occupies residues 2712-2732 (AMACYFGILLIVSATLCFGML). Over 2733-2849 (RGFLMTLPQK…AAEPADIKDF (117 aa)) the chain is Cytoplasmic.

The protein belongs to the polycystin family. As to quaternary structure, heterodimer. Interacts with PKD2 to form a calcium channel. Interacts with PKD2L1; to form ciliary calcium channel. May interact with GNA12, GNAS, GNAI1 and GNAI2. Detected in testis and in fetal and adult heart.

It localises to the cell projection. The protein localises to the cilium membrane. Component of a calcium-permeant ion channel formed by PKD1L2 and PKD1L1 in primary cilia, where it controls cilium calcium concentration, without affecting cytoplasmic calcium concentration, and regulates sonic hedgehog/SHH signaling and GLI2 transcription. The PKD1L1:PKD2L1 channel complex is mechanosensitive only at high pressures and is highly temperature sensitive. Also involved in left/right axis specification downstream of nodal flow by forming a complex with PKD2 in cilia to facilitate flow detection in left/right patterning. May function as a G-protein-coupled receptor. The protein is Polycystin-1-like protein 1 of Homo sapiens (Human).